The sequence spans 159 residues: Transmembrane protein 88 (159 aa).

The next 2 membrane-spanning stretches (helical) occupy residues 43-63 (LLLLVLVLGTILLPAVTMLGF) and 88-108 (FTALLVTGFLLLVPLLVLALA). The interval 137 to 159 (PQPRQIRASPGSQAVPTSGKVWV) is disordered.

It belongs to the TMEM88 family. In terms of assembly, interacts (via C-terminus) with DVL1.

The protein localises to the cell membrane. Inhibits the Wnt/beta-catenin signaling pathway. Crucial for heart development and acts downstream of GATA factors in the pre-cardiac mesoderm to specify lineage commitment of cardiomyocyte development. The chain is Transmembrane protein 88 (TMEM88) from Homo sapiens (Human).